A 213-amino-acid chain; its full sequence is MRSKYIVIEGLEGAGKTTARNVVVETLEQLGIRDMVFTREPGGTQLAEKLRSLVLDIKSVGDEIITDKAEVLMFYAARVQLVETVIKPALANGTWVIGDRHDLSTQAYQGGGRGIDQHMLATLRDAVLGDFRPDLTLYLDVTPEVGLKRARARGELDRIEQESFDFFNRTRARYLELAAQDKSIHTIDATQPLEAVMDAIRTTVTRWVKELDA.

Residue 10-17 (GLEGAGKT) coordinates ATP.

It belongs to the thymidylate kinase family.

It catalyses the reaction dTMP + ATP = dTDP + ADP. Its function is as follows. Phosphorylation of dTMP to form dTDP in both de novo and salvage pathways of dTTP synthesis. The protein is Thymidylate kinase of Escherichia coli O157:H7 (strain EC4115 / EHEC).